The chain runs to 323 residues: rRNA 2'-O-methyltransferase fibrillarin (323 aa).

The interval 1 to 80 is disordered; that stretch reads MGFERGGRGG…AKGGAAGKKV (80 aa). Residues R5, R8, R12, R16, R23, R26, R30, R34, R41, R47, R49, R53, R57, R62, R64, and R68 each carry the asymmetric dimethylarginine modification. Over residues 8-76 the composition is skewed to gly residues; it reads RGGARGGGRG…ARGGAKGGAA (69 aa). S-adenosyl-L-methionine-binding positions include 174–175, 193–194, 218–219, and 238–241; these read TS, EF, DA, and DVAQ.

Belongs to the methyltransferase superfamily. Fibrillarin family. Component of box C/D small nucleolar ribonucleoprotein (snoRNP) particles. By homology to other fibrillarins, some or all of the N-terminal domain arginines are modified to asymmetric dimethylarginine (DMA).

It is found in the nucleus. It localises to the nucleolus. It catalyses the reaction L-glutaminyl-[histone H2A] + S-adenosyl-L-methionine = N(5)-methyl-L-glutaminyl-[histone H2A] + S-adenosyl-L-homocysteine + H(+). Functionally, S-adenosyl-L-methionine-dependent methyltransferase that has the ability to methylate both RNAs and proteins. Involved in pre-rRNA processing. Utilizes the methyl donor S-adenosyl-L-methionine to catalyze the site-specific 2'-hydroxyl methylation of ribose moieties in pre-ribosomal RNA. Site specificity is provided by a guide RNA that base pairs with the substrate. Methylation occurs at a characteristic distance from the sequence involved in base pairing with the guide RNA. Also acts as a protein methyltransferase by mediating methylation of 'Gln-105' of histone H2A (H2AQ105me), a modification that impairs binding of the FACT complex and is specifically present at 35S ribosomal DNA locus. The protein is rRNA 2'-O-methyltransferase fibrillarin (nop-1) of Neurospora crassa (strain ATCC 24698 / 74-OR23-1A / CBS 708.71 / DSM 1257 / FGSC 987).